The following is a 372-amino-acid chain: NAD(P)H-quinone oxidoreductase subunit 1 (372 aa).

Transmembrane regions (helical) follow at residues 27 to 47 (TIWL…GVLV), 65 to 85 (PEYI…KLVF), 97 to 117 (WLFT…YLIV), 128 to 148 (LGIG…GLLM), 176 to 196 (LALA…IDIV), 204 to 224 (ILGW…IAAL), 249 to 269 (YAGM…VLSS), 308 to 328 (GLGL…AILL), and 351 to 371 (VGLV…FAFG).

It belongs to the complex I subunit 1 family. In terms of assembly, NDH-1 is composed of at least 11 different subunits.

It is found in the cellular thylakoid membrane. It carries out the reaction a plastoquinone + NADH + (n+1) H(+)(in) = a plastoquinol + NAD(+) + n H(+)(out). The enzyme catalyses a plastoquinone + NADPH + (n+1) H(+)(in) = a plastoquinol + NADP(+) + n H(+)(out). Functionally, NDH-1 shuttles electrons from an unknown electron donor, via FMN and iron-sulfur (Fe-S) centers, to quinones in the respiratory and/or the photosynthetic chain. The immediate electron acceptor for the enzyme in this species is believed to be plastoquinone. Couples the redox reaction to proton translocation, and thus conserves the redox energy in a proton gradient. In Acaryochloris marina (strain MBIC 11017), this protein is NAD(P)H-quinone oxidoreductase subunit 1.